The chain runs to 1373 residues: DNA-directed RNA polymerase subunit beta (1373 aa).

It belongs to the RNA polymerase beta chain family. As to quaternary structure, the RNAP catalytic core consists of 2 alpha, 1 beta, 1 beta' and 1 omega subunit. When a sigma factor is associated with the core the holoenzyme is formed, which can initiate transcription.

It carries out the reaction RNA(n) + a ribonucleoside 5'-triphosphate = RNA(n+1) + diphosphate. Functionally, DNA-dependent RNA polymerase catalyzes the transcription of DNA into RNA using the four ribonucleoside triphosphates as substrates. In Lawsonia intracellularis (strain PHE/MN1-00), this protein is DNA-directed RNA polymerase subunit beta.